Consider the following 147-residue polypeptide: Peptide deformylase (147 aa).

Positions 88 and 130 each coordinate Fe cation. The active site involves glutamate 131. A Fe cation-binding site is contributed by histidine 134.

Belongs to the polypeptide deformylase family. Fe(2+) serves as cofactor.

The enzyme catalyses N-terminal N-formyl-L-methionyl-[peptide] + H2O = N-terminal L-methionyl-[peptide] + formate. Functionally, removes the formyl group from the N-terminal Met of newly synthesized proteins. Requires at least a dipeptide for an efficient rate of reaction. N-terminal L-methionine is a prerequisite for activity but the enzyme has broad specificity at other positions. The sequence is that of Peptide deformylase from Alkaliphilus metalliredigens (strain QYMF).